Here is a 54-residue protein sequence, read N- to C-terminus: ComX pheromone (54 aa).

Residues Met1–Tyr46 constitute a propeptide that is removed on maturation. Trp51 carries the 3'-geranyl-2',N2-cyclotryptophan lipid modification.

As to quaternary structure, interacts directly with the sensor histidine kinase ComP and stimulates its activity. In terms of processing, trp-51 is modified by isoprenylation, probably by geranylation, which is essential for activity. Modified by the tryptophan prenyltransferase ComQ before export to the extracellular environment. The type of isoprenyl derivative differs among the different pherotypes and depends on ComX primary sequence.

Its subcellular location is the secreted. Part of a major quorum-sensing system that regulates the development of genetic competence. Acts through the activation of the two-component regulatory system ComP/ComA composed of a sensor histidine kinase, ComP, and a response regulator, ComA. In Bacillus mojavensis, this protein is ComX pheromone.